The primary structure comprises 396 residues: Elongation factor Tu (396 aa).

The tr-type G domain occupies 10–206; sequence KPHVNVGTIG…AMDEYIPTPE (197 aa). The tract at residues 19-26 is G1; it reads GHVDHGKT. Position 19–26 (19–26) interacts with GTP; that stretch reads GHVDHGKT. Residue threonine 26 coordinates Mg(2+). Residues 60 to 64 are G2; the sequence is GITIA. The G3 stretch occupies residues 81-84; the sequence is DCPG. Residues 81–85 and 136–139 each bind GTP; these read DCPGH and NKAD. The segment at 136–139 is G4; sequence NKAD. Residues 174-176 form a G5 region; that stretch reads SAL.

The protein belongs to the TRAFAC class translation factor GTPase superfamily. Classic translation factor GTPase family. EF-Tu/EF-1A subfamily. Monomer.

It localises to the cytoplasm. It catalyses the reaction GTP + H2O = GDP + phosphate + H(+). GTP hydrolase that promotes the GTP-dependent binding of aminoacyl-tRNA to the A-site of ribosomes during protein biosynthesis. In Alkalilimnicola ehrlichii (strain ATCC BAA-1101 / DSM 17681 / MLHE-1), this protein is Elongation factor Tu.